The sequence spans 168 residues: MFLTYFDAMPRRVLALVSLACVALLAFGLYLQHVVGLEPCPMCIVQRYALVLVAVVAGITAVAKSRGLLITGSGLLVLLSGFGAFVAARQSFLQWYPPEVASCGRDFYGMIETFPLKRAIPMIFKGSGDCTKIDWTFLGLSIANWSFLCFVAIALVGLVLITRLARQR.

Over 1 to 13 (MFLTYFDAMPRRV) the chain is Cytoplasmic. The helical transmembrane segment at 14–30 (LALVSLACVALLAFGLY) threads the bilayer. Residues 31–48 (LQHVVGLEPCPMCIVQRY) are Periplasmic-facing. Cysteine 40 and cysteine 43 form a disulfide bridge. The helical transmembrane segment at 49–64 (ALVLVAVVAGITAVAK) threads the bilayer. Topologically, residues 65–70 (SRGLLI) are cytoplasmic. The chain crosses the membrane as a helical span at residues 71–88 (TGSGLLVLLSGFGAFVAA). Residues 89-144 (RQSFLQWYPPEVASCGRDFYGMIETFPLKRAIPMIFKGSGDCTKIDWTFLGLSIAN) are Periplasmic-facing. Cysteine 103 and cysteine 130 are joined by a disulfide. The helical transmembrane segment at 145–163 (WSFLCFVAIALVGLVLITR) threads the bilayer. Over 164–168 (LARQR) the chain is Cytoplasmic.

It belongs to the DsbB family.

It is found in the cell inner membrane. Functionally, required for disulfide bond formation in some periplasmic proteins. Acts by oxidizing the DsbA protein. The polypeptide is Disulfide bond formation protein B (Polaromonas sp. (strain JS666 / ATCC BAA-500)).